The chain runs to 176 residues: Peptidyl-prolyl cis-trans isomerase CYP19-3 (176 aa).

One can recognise a PPIase cyclophilin-type domain in the interval 7 to 170; the sequence is FFDILIGKMK…ERVVIEDCGE (164 aa).

It belongs to the cyclophilin-type PPIase family. As to expression, ubiquitous, with highest levels in flowers and lowest levels in roots.

It is found in the cytoplasm. The catalysed reaction is [protein]-peptidylproline (omega=180) = [protein]-peptidylproline (omega=0). Binds cyclosporin A (CsA). CsA mediates some of its effects via an inhibitory action on PPIase. Functionally, PPIases accelerate the folding of proteins. It catalyzes the cis-trans isomerization of proline imidic peptide bonds in oligopeptides. The protein is Peptidyl-prolyl cis-trans isomerase CYP19-3 (CYP19-3) of Arabidopsis thaliana (Mouse-ear cress).